The sequence spans 423 residues: Innexin eat-5 (423 aa).

4 consecutive transmembrane segments (helical) span residues 25-41 (YYYS…TITA), 102-122 (PFIM…WSML), 277-297 (IFLF…FDSI), and 341-361 (HSIL…IILL).

Belongs to the pannexin family. As to quaternary structure, heterooligomer of eat-5 and another innexin. As to expression, expressed in pharyngeal muscles.

It localises to the cell membrane. It is found in the cell junction. The protein resides in the gap junction. Structural component of the gap junctions. Required for synchronized pharyngeal muscle contractions. The polypeptide is Innexin eat-5 (eat-5) (Caenorhabditis elegans).